A 212-amino-acid polypeptide reads, in one-letter code: Imidazole glycerol phosphate synthase subunit HisH (212 aa).

Positions 1-212 (MLAILDYKAG…YAYCKEASRA (212 aa)) constitute a Glutamine amidotransferase type-1 domain. Catalysis depends on cysteine 79, which acts as the Nucleophile. Residues histidine 187 and glutamate 189 contribute to the active site.

As to quaternary structure, heterodimer of HisH and HisF.

Its subcellular location is the cytoplasm. It carries out the reaction 5-[(5-phospho-1-deoxy-D-ribulos-1-ylimino)methylamino]-1-(5-phospho-beta-D-ribosyl)imidazole-4-carboxamide + L-glutamine = D-erythro-1-(imidazol-4-yl)glycerol 3-phosphate + 5-amino-1-(5-phospho-beta-D-ribosyl)imidazole-4-carboxamide + L-glutamate + H(+). The enzyme catalyses L-glutamine + H2O = L-glutamate + NH4(+). It functions in the pathway amino-acid biosynthesis; L-histidine biosynthesis; L-histidine from 5-phospho-alpha-D-ribose 1-diphosphate: step 5/9. IGPS catalyzes the conversion of PRFAR and glutamine to IGP, AICAR and glutamate. The HisH subunit catalyzes the hydrolysis of glutamine to glutamate and ammonia as part of the synthesis of IGP and AICAR. The resulting ammonia molecule is channeled to the active site of HisF. The sequence is that of Imidazole glycerol phosphate synthase subunit HisH from Nitratidesulfovibrio vulgaris (strain DSM 19637 / Miyazaki F) (Desulfovibrio vulgaris).